The sequence spans 180 residues: Shikimate kinase (180 aa).

14–19 (GAGKST) provides a ligand contact to ATP. Position 18 (S18) interacts with Mg(2+). D36, R60, and G82 together coordinate substrate. Position 120 (R120) interacts with ATP. R140 lines the substrate pocket. Q157 is a binding site for ATP.

It belongs to the shikimate kinase family. In terms of assembly, monomer. Mg(2+) is required as a cofactor.

The protein localises to the cytoplasm. It carries out the reaction shikimate + ATP = 3-phosphoshikimate + ADP + H(+). It functions in the pathway metabolic intermediate biosynthesis; chorismate biosynthesis; chorismate from D-erythrose 4-phosphate and phosphoenolpyruvate: step 5/7. In terms of biological role, catalyzes the specific phosphorylation of the 3-hydroxyl group of shikimic acid using ATP as a cosubstrate. The sequence is that of Shikimate kinase from Haemophilus influenzae (strain PittGG).